A 179-amino-acid polypeptide reads, in one-letter code: Large ribosomal subunit protein uL6 (179 aa).

It belongs to the universal ribosomal protein uL6 family. As to quaternary structure, part of the 50S ribosomal subunit.

In terms of biological role, this protein binds to the 23S rRNA, and is important in its secondary structure. It is located near the subunit interface in the base of the L7/L12 stalk, and near the tRNA binding site of the peptidyltransferase center. The protein is Large ribosomal subunit protein uL6 of Chlorobium chlorochromatii (strain CaD3).